The sequence spans 318 residues: Ribosomal RNA small subunit methyltransferase H (318 aa).

Residues 37–39, Asp-56, Tyr-83, Asp-104, and Gln-111 contribute to the S-adenosyl-L-methionine site; that span reads GGH. The tract at residues 293–318 is disordered; that stretch reads EEEIAENRRAAPARLRGAQRIREDAE.

The protein belongs to the methyltransferase superfamily. RsmH family.

Its subcellular location is the cytoplasm. The enzyme catalyses cytidine(1402) in 16S rRNA + S-adenosyl-L-methionine = N(4)-methylcytidine(1402) in 16S rRNA + S-adenosyl-L-homocysteine + H(+). Its function is as follows. Specifically methylates the N4 position of cytidine in position 1402 (C1402) of 16S rRNA. The chain is Ribosomal RNA small subunit methyltransferase H from Streptomyces avermitilis (strain ATCC 31267 / DSM 46492 / JCM 5070 / NBRC 14893 / NCIMB 12804 / NRRL 8165 / MA-4680).